The sequence spans 551 residues: Transcription factor 7-like 1-B (551 aa).

Over residues 1–11 (MPQLNSGGGDE) the composition is skewed to gly residues. The interaction with CTNNB1-A stretch occupies residues 1-61 (MPQLNSGGGD…SENHSSDSDS (61 aa)). Disordered regions lie at residues 1 to 77 (MPQL…EKPR), 183 to 213 (GTPP…PYYP), 391 to 474 (WSAR…SLTT), and 492 to 515 (SPSS…SRPI). Composition is skewed to basic and acidic residues over residues 17–32 (ELIR…EKSP) and 52–77 (SENH…EKPR). The interaction with AES and TLE4-A stretch occupies residues 109–312 (LGGHYLPNGA…SPNLSTKSNV (204 aa)). Positions 324–392 (IKKPLNAFML…LHSQLYPSWS (69 aa)) form a DNA-binding region, HMG box. Positions 407 to 416 (KQSPEMENYT) are enriched in basic and acidic residues. The interval 408–551 (QSPEMENYTK…PLSLVTRSSD (144 aa)) is interaction with CTBP-B. A compositionally biased stretch (low complexity) spans 445-464 (SPATPSAALASPAAPAATHS). Residues 465–474 (EQAQPLSLTT) are compositionally biased toward polar residues.

Belongs to the TCF/LEF family. Interacts with csnk1e, ctnnb1-A, ctbp-B, dact1-A and gsk3b. May interact with ase and tle4-A. Interacts with tle1-B. Post-translationally, phosphorylated. Phosphorylation by csnk1e promotes binding to ctnnb1-A while phosphorylation by gsk3b may reverse this effect.

The protein resides in the nucleus. In terms of biological role, participates in the Wnt signaling pathway. Binds to DNA and acts as a repressor in the absence of ctnnb1-A and possibly ctnnb1-B, and as an activator in the presence of these proteins. Required early in development for the establishment of the dorsal body axis in response to maternal Wnt signaling. The chain is Transcription factor 7-like 1-B (tcf7l1-b) from Xenopus laevis (African clawed frog).